A 520-amino-acid chain; its full sequence is Dynein axonemal assembly factor 8 (520 aa).

Disordered regions lie at residues 93–202, 217–256, 328–366, and 388–520; these read PVLV…LRQE, RDAC…EGPP, CARK…QLAQ, and DHLS…LEQL. The span at 111-125 shows a compositional bias: basic and acidic residues; that stretch reads RTKDASSQEGRDPGR. Residue S161 is modified to Phosphoserine. A Phosphoserine modification is found at S351. The segment covering 401-410 has biased composition (acidic residues); the sequence is DSEEEEEEEM. The segment covering 420-437 has biased composition (polar residues); the sequence is SPSSLGLRTCTGKSQLLQ.

In terms of tissue distribution, expressed in respiratory ciliated cells (at protein level).

It is found in the dynein axonemal particle. The protein resides in the cytoplasm. Its function is as follows. In cyliated cells, dynein axonemal particle-specific protein required for deployment of ODA to the axoneme. Interacts with outer dynein arm (ODA) subunits. The protein is Dynein axonemal assembly factor 8 of Homo sapiens (Human).